The following is a 222-amino-acid chain: Uracil-DNA glycosylase (222 aa).

Asp61 serves as the catalytic Proton acceptor.

It belongs to the uracil-DNA glycosylase (UDG) superfamily. UNG family.

Its subcellular location is the cytoplasm. It catalyses the reaction Hydrolyzes single-stranded DNA or mismatched double-stranded DNA and polynucleotides, releasing free uracil.. Functionally, excises uracil residues from the DNA which can arise as a result of misincorporation of dUMP residues by DNA polymerase or due to deamination of cytosine. The sequence is that of Uracil-DNA glycosylase from Actinobacillus succinogenes (strain ATCC 55618 / DSM 22257 / CCUG 43843 / 130Z).